Reading from the N-terminus, the 193-residue chain is Cysteine and glycine-rich protein 2 (193 aa).

The LIM zinc-binding 1 domain occupies 10–61 (CGACGRTVYHAEEVQCDGRSFHRCCFLCMVCRKNLDSTTVAIHDEEIYCKSC). A Nuclear localization signal motif is present at residues 64-69 (KKYGPK). A Glycyl lysine isopeptide (Lys-Gly) (interchain with G-Cter in SUMO2) cross-link involves residue lysine 91. 2 positions are modified to N6-acetyllysine: lysine 112 and lysine 131. Residues 119 to 170 (CSRCGDSVYAAEKIIGAGKPWHKNCFRCAKCGKSLESTTLTEKEGEIYCKGC) form the LIM zinc-binding 2 domain. An N6-acetyllysine; alternate modification is found at lysine 137. The residue at position 137 (lysine 137) is an N6-succinyllysine; alternate. The residue at position 161 (lysine 161) is an N6-acetyllysine.

As to quaternary structure, interacts with KAT14. The LIM domain 1 is necessary and sufficient for this interaction. Interacts with GLRX3.

It localises to the nucleus. Drastically down-regulated in response to PDGF-BB or cell injury, that promote smooth muscle cell proliferation and dedifferentiation. Seems to play a role in the development of the embryonic vascular system. This Mus musculus (Mouse) protein is Cysteine and glycine-rich protein 2 (Csrp2).